A 399-amino-acid chain; its full sequence is Enoyl-[acyl-carrier-protein] reductase [NADH] (399 aa).

NAD(+)-binding positions include 49–54 (GASSGY), 75–76 (FE), 112–113 (DA), and 141–142 (LA). A substrate-binding site is contributed by tyrosine 227. Tyrosine 237 (proton donor) is an active-site residue. Residues lysine 246 and 272–274 (VVT) each bind NAD(+).

This sequence belongs to the TER reductase family. Monomer.

It catalyses the reaction a 2,3-saturated acyl-[ACP] + NAD(+) = a (2E)-enoyl-[ACP] + NADH + H(+). It participates in lipid metabolism; fatty acid biosynthesis. Its function is as follows. Involved in the final reduction of the elongation cycle of fatty acid synthesis (FAS II). Catalyzes the reduction of a carbon-carbon double bond in an enoyl moiety that is covalently linked to an acyl carrier protein (ACP). The sequence is that of Enoyl-[acyl-carrier-protein] reductase [NADH] from Pseudomonas putida (strain W619).